The following is a 157-amino-acid chain: Transcription elongation factor GreA (157 aa).

Residues 46–67 are a coiled coil; sequence AEYHAARERQSFIEGRIKELED.

The protein belongs to the GreA/GreB family.

Necessary for efficient RNA polymerase transcription elongation past template-encoded arresting sites. The arresting sites in DNA have the property of trapping a certain fraction of elongating RNA polymerases that pass through, resulting in locked ternary complexes. Cleavage of the nascent transcript by cleavage factors such as GreA or GreB allows the resumption of elongation from the new 3'terminus. GreA releases sequences of 2 to 3 nucleotides. This Rhodospirillum rubrum (strain ATCC 11170 / ATH 1.1.1 / DSM 467 / LMG 4362 / NCIMB 8255 / S1) protein is Transcription elongation factor GreA.